A 495-amino-acid chain; its full sequence is GTPase Der (495 aa).

EngA-type G domains lie at 3–166 and 208–381; these read PVVA…VQDE and IKLA…ACAT. Residues 9 to 16, 56 to 60, 118 to 121, 214 to 221, 261 to 265, and 326 to 329 each bind GTP; these read GRPNVGKS, DTGGI, NKTD, DTAGV, and NKWD. A KH-like domain is found at 382-466; the sequence is RRVSTAMLTR…PIRIQFKEGE (85 aa).

It belongs to the TRAFAC class TrmE-Era-EngA-EngB-Septin-like GTPase superfamily. EngA (Der) GTPase family. Associates with the 50S ribosomal subunit.

In terms of biological role, GTPase that plays an essential role in the late steps of ribosome biogenesis. This Pectobacterium carotovorum subsp. carotovorum (strain PC1) protein is GTPase Der.